Consider the following 165-residue polypeptide: Putative ankyrin repeat domain-containing protein 20A5 (165 aa).

ANK repeat units follow at residues 66 to 95 (QHRTALHLACASGHVKVVTLLVNRKCQIDI), 99 to 128 (ENRTPLIQAVHCQEEACAVILLEHGANPNL), and 132 to 161 (YGNTALHYAVYSESTSLAEKLLFHGENIEA).

The polypeptide is Putative ankyrin repeat domain-containing protein 20A5 (ANKRD20A5P) (Homo sapiens (Human)).